The following is a 455-amino-acid chain: Ornithine decarboxylase (455 aa).

Lysine 67 is modified (N6-(pyridoxal phosphate)lysine). Pyridoxal 5'-phosphate-binding positions include serine 197, glycine 234, and 271–274 (EPGR). Serine 297 carries the phosphoserine; by CK2 modification. 325–326 (YD) contributes to the substrate binding site. The active-site Proton donor; shared with dimeric partner is cysteine 354. Cysteine 354 carries the post-translational modification S-nitrosocysteine. Aspartate 355 is a binding site for substrate. Tyrosine 383 lines the pyridoxal 5'-phosphate pocket.

Belongs to the Orn/Lys/Arg decarboxylase class-II family. In terms of assembly, homodimer. Only the dimer is catalytically active, as the active sites are constructed of residues from both monomers. Requires pyridoxal 5'-phosphate as cofactor.

The enzyme catalyses L-ornithine + H(+) = putrescine + CO2. The protein operates within amine and polyamine biosynthesis; putrescine biosynthesis via L-ornithine pathway; putrescine from L-ornithine: step 1/1. With respect to regulation, inhibited by antizymes (AZs) OAZ1, OAZ2 and OAZ3 in response to polyamine levels. AZs inhibit the assembly of the functional homodimer by binding to ODC monomers. Additionally, OAZ1 targets ODC monomers for ubiquitin-independent proteolytic destruction by the 26S proteasome. Its function is as follows. Catalyzes the first and rate-limiting step of polyamine biosynthesis that converts ornithine into putrescine, which is the precursor for the polyamines, spermidine and spermine. Polyamines are essential for cell proliferation and are implicated in cellular processes, ranging from DNA replication to apoptosis. This is Ornithine decarboxylase (ODC1) from Cricetulus griseus (Chinese hamster).